Reading from the N-terminus, the 505-residue chain is RNA-splicing ligase RtcB homolog (505 aa).

Residues Asp-119, Cys-122, His-227, and His-259 each contribute to the Mn(2+) site. Position 226-230 (226-230 (NHYAE)) interacts with GMP. At Ser-300 the chain carries Phosphoserine. His-353 contributes to the Mn(2+) binding site. Residues 353-354 (HN), 402-405 (GGTM), Ser-409, and 428-431 (HGAG) contribute to the GMP site. His-428 acts as the GMP-histidine intermediate in catalysis. Residue Lys-496 forms a Glycyl lysine isopeptide (Lys-Gly) (interchain with G-Cter in SUMO2) linkage. Residue Lys-504 coordinates GMP.

Belongs to the RtcB family. As to quaternary structure, catalytic component of the tRNA-splicing ligase complex. Mn(2+) serves as cofactor.

The protein resides in the nucleus. The protein localises to the cytoplasm. It carries out the reaction a 3'-end 3'-phospho-ribonucleotide-RNA + a 5'-end dephospho-ribonucleoside-RNA + GTP = a ribonucleotidyl-ribonucleotide-RNA + GMP + diphosphate. It catalyses the reaction a 3'-end 2',3'-cyclophospho-ribonucleotide-RNA + a 5'-end dephospho-ribonucleoside-RNA + GTP + H2O = a ribonucleotidyl-ribonucleotide-RNA + GMP + diphosphate + H(+). Its function is as follows. Catalytic subunit of the tRNA-splicing ligase complex that acts by directly joining spliced tRNA halves to mature-sized tRNAs by incorporating the precursor-derived splice junction phosphate into the mature tRNA as a canonical 3',5'-phosphodiester. May act as an RNA ligase with broad substrate specificity, and may function toward other RNAs. This chain is RNA-splicing ligase RtcB homolog, found in Rattus norvegicus (Rat).